A 195-amino-acid chain; its full sequence is Kiwa protein KwaA (195 aa).

Helical transmembrane passes span 10-30, 46-66, and 117-137; these read GLYI…TAKI, LVLT…SIYF, and IAYL…DKYY.

It is found in the cell inner membrane. In terms of biological role, component of antiviral defense system Kiwa, composed of KwaA and KwaB. Expression of Kiwa in E.coli (strain MG1655) confers resistance to phages lambda and SECphi18. The chain is Kiwa protein KwaA from Escherichia coli O55:H7 (strain RM12579 / EPEC).